The primary structure comprises 256 residues: Thiazole synthase (256 aa).

The active-site Schiff-base intermediate with DXP is K102. Residues G163, 189 to 190, and 211 to 212 contribute to the 1-deoxy-D-xylulose 5-phosphate site; these read AG and AT.

It belongs to the ThiG family. As to quaternary structure, homotetramer. Forms heterodimers with either ThiH or ThiS.

The protein resides in the cytoplasm. The catalysed reaction is [ThiS sulfur-carrier protein]-C-terminal-Gly-aminoethanethioate + 2-iminoacetate + 1-deoxy-D-xylulose 5-phosphate = [ThiS sulfur-carrier protein]-C-terminal Gly-Gly + 2-[(2R,5Z)-2-carboxy-4-methylthiazol-5(2H)-ylidene]ethyl phosphate + 2 H2O + H(+). It participates in cofactor biosynthesis; thiamine diphosphate biosynthesis. Functionally, catalyzes the rearrangement of 1-deoxy-D-xylulose 5-phosphate (DXP) to produce the thiazole phosphate moiety of thiamine. Sulfur is provided by the thiocarboxylate moiety of the carrier protein ThiS. In vitro, sulfur can be provided by H(2)S. The chain is Thiazole synthase from Nocardia farcinica (strain IFM 10152).